The sequence spans 410 residues: Serine/threonine transporter SstT (410 aa).

10 helical membrane-spanning segments follow: residues 15-35, 49-69, 82-102, 118-138, 142-162, 190-210, 217-237, 299-319, 331-351, and 358-378; these read GSLV…AWLS, FVNA…ISSI, PIVM…VVAS, IVPP…MVTN, AVMK…GFAF, FAPV…GFDA, LLGL…PLLV, MAGA…TLGI, LVAS…LLLI, and FGIP…IGVL.

The protein belongs to the dicarboxylate/amino acid:cation symporter (DAACS) (TC 2.A.23) family.

It localises to the cell inner membrane. It carries out the reaction L-serine(in) + Na(+)(in) = L-serine(out) + Na(+)(out). It catalyses the reaction L-threonine(in) + Na(+)(in) = L-threonine(out) + Na(+)(out). Its function is as follows. Involved in the import of serine and threonine into the cell, with the concomitant import of sodium (symport system). The chain is Serine/threonine transporter SstT from Erwinia tasmaniensis (strain DSM 17950 / CFBP 7177 / CIP 109463 / NCPPB 4357 / Et1/99).